Consider the following 278-residue polypeptide: Sulfur carrier protein FdhD (278 aa).

Cys121 (cysteine persulfide intermediate) is an active-site residue. 260-265 (FCKPGR) serves as a coordination point for Mo-bis(molybdopterin guanine dinucleotide).

The protein belongs to the FdhD family.

It is found in the cytoplasm. Functionally, required for formate dehydrogenase (FDH) activity. Acts as a sulfur carrier protein that transfers sulfur from IscS to the molybdenum cofactor prior to its insertion into FDH. The protein is Sulfur carrier protein FdhD of Salmonella choleraesuis (strain SC-B67).